A 350-amino-acid polypeptide reads, in one-letter code: Vetispiradiene synthase 3 (350 aa).

Mg(2+)-binding residues include aspartate 103, aspartate 107, aspartate 246, threonine 250, and glutamate 254. Positions aspartate 103–aspartate 107 match the DDXXD motif motif.

The protein belongs to the terpene synthase family. Tpsa subfamily. It depends on Mg(2+) as a cofactor.

The protein localises to the cytoplasm. It catalyses the reaction (2E,6E)-farnesyl diphosphate = (-)-vetispiradiene + diphosphate. The protein operates within secondary metabolite biosynthesis; terpenoid biosynthesis. Sesquiterpene synthase that catalyzes the formation of vetispiradiene from trans,trans-farnesyl diphosphate. The initial internal cyclization produces the monocyclic intermediate germacrene A. The polypeptide is Vetispiradiene synthase 3 (Hyoscyamus muticus (Egyptian henbane)).